We begin with the raw amino-acid sequence, 124 residues long: Small ribosomal subunit protein uS12 (124 aa).

Residues 1–22 are disordered; it reads MATVNQLVRKPRKRKVAKSDVP. D89 carries the post-translational modification 3-methylthioaspartic acid. Residues 99–124 are disordered; sequence RGSLDTSGVQNRKQGRSKYGTKRPKK. The segment covering 111 to 124 has biased composition (basic residues); it reads KQGRSKYGTKRPKK.

It belongs to the universal ribosomal protein uS12 family. In terms of assembly, part of the 30S ribosomal subunit. Contacts proteins S8 and S17. May interact with IF1 in the 30S initiation complex.

Functionally, with S4 and S5 plays an important role in translational accuracy. Its function is as follows. Interacts with and stabilizes bases of the 16S rRNA that are involved in tRNA selection in the A site and with the mRNA backbone. Located at the interface of the 30S and 50S subunits, it traverses the body of the 30S subunit contacting proteins on the other side and probably holding the rRNA structure together. The combined cluster of proteins S8, S12 and S17 appears to hold together the shoulder and platform of the 30S subunit. This is Small ribosomal subunit protein uS12 from Marinomonas sp. (strain MWYL1).